A 443-amino-acid chain; its full sequence is Tol-Pal system protein TolB (443 aa).

The first 33 residues, 1–33 (MKIGIINTKIRTVFSAFACMIAASLVCTMPARA), serve as a signal peptide directing secretion.

The protein belongs to the TolB family. The Tol-Pal system is composed of five core proteins: the inner membrane proteins TolA, TolQ and TolR, the periplasmic protein TolB and the outer membrane protein Pal. They form a network linking the inner and outer membranes and the peptidoglycan layer.

The protein localises to the periplasm. Its function is as follows. Part of the Tol-Pal system, which plays a role in outer membrane invagination during cell division and is important for maintaining outer membrane integrity. The protein is Tol-Pal system protein TolB of Brucella melitensis biotype 1 (strain ATCC 23456 / CCUG 17765 / NCTC 10094 / 16M).